Here is a 315-residue protein sequence, read N- to C-terminus: tRNA-cytidine(32) 2-sulfurtransferase (315 aa).

Positions 54-59 match the PP-loop motif motif; that stretch reads SGGKDS. [4Fe-4S] cluster-binding residues include Cys129, Cys132, and Cys220.

This sequence belongs to the TtcA family. Homodimer. It depends on Mg(2+) as a cofactor. Requires [4Fe-4S] cluster as cofactor.

It is found in the cytoplasm. The catalysed reaction is cytidine(32) in tRNA + S-sulfanyl-L-cysteinyl-[cysteine desulfurase] + AH2 + ATP = 2-thiocytidine(32) in tRNA + L-cysteinyl-[cysteine desulfurase] + A + AMP + diphosphate + H(+). It participates in tRNA modification. Catalyzes the ATP-dependent 2-thiolation of cytidine in position 32 of tRNA, to form 2-thiocytidine (s(2)C32). The sulfur atoms are provided by the cysteine/cysteine desulfurase (IscS) system. The polypeptide is tRNA-cytidine(32) 2-sulfurtransferase (Bordetella avium (strain 197N)).